We begin with the raw amino-acid sequence, 146 residues long: Kappa-casein (146 aa).

Residues Thr-107 and Thr-112 are each glycosylated (O-linked (GalNAc...) threonine). The residue at position 125 (Ser-125) is a Phosphoserine; alternate. O-linked (GalNAc...) serine; alternate glycosylation occurs at Ser-125. The O-linked (GalNAc...) threonine glycan is linked to Thr-142. A Phosphoserine modification is found at Ser-143.

Belongs to the kappa-casein family. Mammary gland specific. Secreted in milk.

The protein localises to the secreted. In terms of biological role, kappa-casein stabilizes micelle formation, preventing casein precipitation in milk. The chain is Kappa-casein (CSN3) from Tapirus indicus (Asiatic tapir).